A 1086-amino-acid chain; its full sequence is Auxin response factor 19 (1086 aa).

Residues 126–228 (FCKTLTASDT…QLMLGIRRAN (103 aa)) constitute a DNA-binding region (TF-B3). A compositionally biased stretch (polar residues) spans 454-485 (PSKLLNFQSPNLSSANSQFNKPNTVNHISQQM). Disordered regions lie at residues 454–504 (PSKL…QQQQ), 545–564 (QSPN…QSML), 624–647 (LSQN…QQLQ), and 659–788 (QQQS…SVFE). A compositionally biased stretch (low complexity) spans 486-504 (QAQPAMVKSQQQQQQQQQQ). Residues 659–697 (QQQSIPPVSSSLQPQLSALQQTQSHQLQQLLSSQNQQPL) show a composition bias toward low complexity. The span at 700-710 (GNNSFPASTFM) shows a compositional bias: polar residues. Over residues 711 to 724 (QPPQIQVSPQQQGQ) the composition is skewed to low complexity. Positions 747 to 771 (SCSTSPSANNTGHDNVSPTNFLSRN) are enriched in polar residues. The span at 772–785 (QQQGQAASVSASDS) shows a compositional bias: low complexity. The 94-residue stretch at 958–1051 (RTYTKVQKRG…EVQQMSLDGD (94 aa)) folds into the PB1 domain.

The protein belongs to the ARF family. In terms of assembly, homodimers and heterodimers. Interacts with the auxin-responsive protein IAA1. Binds to JMJ30. Binds to ATXR2 in the nucleus.

It localises to the nucleus. Its function is as follows. Auxin response factors (ARFs) are transcriptional factors that bind specifically to the DNA sequence 5'-TGTCTC-3' found in the auxin-responsive promoter elements (AuxREs). Could act as transcriptional activator or repressor. Formation of heterodimers with Aux/IAA proteins may alter their ability to modulate early auxin response genes expression. Involved in ethylene responses. Regulates lateral root formation through direct regulation of LBD16 and/or LBD29. Functionally redundant with ARF7. Involved in cellular dedifferentiation during callus formation on callus-inducing medium (CIM) and in an ATXR2-dependent manner. This Arabidopsis thaliana (Mouse-ear cress) protein is Auxin response factor 19.